The chain runs to 558 residues: Poly(A) polymerase PAPalpha (558 aa).

Residues 1–17 (MNTKTYGVTEPISTNGP) show a composition bias toward polar residues. Residues 1 to 20 (MNTKTYGVTEPISTNGPTPK) are disordered. Residues 86–88 (FGS), 99–101 (DID), D153, K214, Y223, and 232–233 (GV) each bind ATP. Mg(2+) is bound by residues D99, D101, and D153. The interval 516–558 (VYEDGEERPKKSGKKRKKVIKEDGQKRVRNESPASSASVNGSS) is disordered. The segment covering 535-545 (IKEDGQKRVRN) has biased composition (basic and acidic residues). Positions 547–558 (SPASSASVNGSS) are enriched in low complexity.

The protein belongs to the poly(A) polymerase family. Mg(2+) is required as a cofactor. It depends on Mn(2+) as a cofactor.

Its subcellular location is the nucleus. The enzyme catalyses RNA(n) + ATP = RNA(n)-3'-adenine ribonucleotide + diphosphate. In terms of biological role, polymerase that creates the 3'-poly(A) tail of mRNA's. May acquire specificity through interaction with a cleavage and polyadenylation factor. The sequence is that of Poly(A) polymerase PAPalpha (PAPALPHA) from Candida albicans (strain SC5314 / ATCC MYA-2876) (Yeast).